We begin with the raw amino-acid sequence, 475 residues long: Aspartyl/glutamyl-tRNA(Asn/Gln) amidotransferase subunit B (475 aa).

The protein belongs to the GatB/GatE family. GatB subfamily. Heterotrimer of A, B and C subunits.

It carries out the reaction L-glutamyl-tRNA(Gln) + L-glutamine + ATP + H2O = L-glutaminyl-tRNA(Gln) + L-glutamate + ADP + phosphate + H(+). It catalyses the reaction L-aspartyl-tRNA(Asn) + L-glutamine + ATP + H2O = L-asparaginyl-tRNA(Asn) + L-glutamate + ADP + phosphate + 2 H(+). Functionally, allows the formation of correctly charged Asn-tRNA(Asn) or Gln-tRNA(Gln) through the transamidation of misacylated Asp-tRNA(Asn) or Glu-tRNA(Gln) in organisms which lack either or both of asparaginyl-tRNA or glutaminyl-tRNA synthetases. The reaction takes place in the presence of glutamine and ATP through an activated phospho-Asp-tRNA(Asn) or phospho-Glu-tRNA(Gln). The protein is Aspartyl/glutamyl-tRNA(Asn/Gln) amidotransferase subunit B of Bacillus anthracis (strain A0248).